Here is a 2671-residue protein sequence, read N- to C-terminus: Stalled ribosome sensor GCN1 (2671 aa).

Ala2 carries the post-translational modification N-acetylalanine. HEAT repeat units follow at residues 140–178 (NKLVEVQCLLLLEVLGGSHKHAVDGAVKKLTKLWKENPG), 257–293 (EFKDLILPTIQKSLLRSPENVIETISSLLASVTLDLS), 294–331 (QYAMDIVKGLAGHLKSNSPRLMDEAVLALRNLARQCSD), 385–423 (IVAELFIPFLQQEVHEGTLVHAVSVLALWCNRFTMEVPK), 425–459 (LTEWFKKAFSLKTSTSAVRHAYLQCMLASYRGDTL), 460–503 (LQAL…SVAD), 560–597 (NKVQQYHRALVAVLLSRTWHVRRQAQQTVRKLLSSLGG), 599–636 (KLAHGLLEELKTVLSSHKVLPLEALVTDAGEVTEAGKA), 697–732 (DPEAFITRHLDQIIPRMTTQSPLNQSSMNAMGSLSV), and 733–770 (LSPDRVLPQLISTITASVQNPALRLVTREEFAIMQTPA). Residue Ser729 is modified to Phosphoserine. A Phosphoserine modification is found at Ser786. Residues 804 to 863 (QIIELELKEEIKKKKGIKEEVQLTSKQKEMLQAQLDREAQVRRRLQELDGELEAALGLLD) adopt a coiled-coil conformation. 36 HEAT repeats span residues 879–925 (VLVD…HVTL), 979–1016 (SLVFPFLKMVLTEMPHHSEEEEEWMAQILQILTVQAQL), 1035–1072 (LPRVAMLRLLTWVIGTGSPRLQVLASDTLTTLCASSSG), 1078–1115 (FAEQEEVDVLLCALQSPCASVRETVLRGLMELHMVLPA), 1155–1192 (DLQPDLCSLLIDDVIYHEAAVRQAGAEALSQAVARYQR), 1210–1250 (YRPP…YLDS), 1251–1289 (SQVKPLFQFFVPDALNDRHPDVRKCMLDAALATLNTHGK), 1290–1332 (ENVN…HLDK), 1335–1372 (PKVKPIVAKLIAALSTPSQQVQESVASCLPPLVPAIKE), 1374–1410 (AGGMIQRLMQQLLESDKYAERKGAAYGLAGLVKGLGI), 1413–1451 (LKQQEMMAALTDAIQDKKNFRRREGALFAFEMLCTMLGK), 1455–1492 (PYVVHVLPHLLLCFGDGNQYVREAADDCAKAVMSNLSA), 1493–1530 (HGVKLVLPSLLAALEEESWRTKAGSVELLGAMAYCAPK), 1534–1571 (SCLPNIVPKLTEVLTDSHVKVQKAGQQALRQIGSVIRN), 1573–1609 (EILAIAPVLLDALTDPSRKTQKCLQTLLDTKFVHFID), 1611–1648 (PSLALIMPIVQRAFQDRSTDTRKMAAQIIGNMYSLTDQ), 1653–1690 (PYLPSVTPGLKASLLDPVPEVRTVSAKALGAMVKGMGE), 1692–1729 (CFEDLLPWLMETLTYEQSSVDRSGAAQGLAEVMAGLGV), 1731–1769 (KLEKLMPEIVATASKVDIAPHVRDGYIMMFNYLPITFGD), 1773–1810 (PYVGPIIPCILKALADENEFVRDTALRAGQRVISMYAE), 1812–1848 (AIALLLPQLEQGLFDDLWRIRFSSVQLLGDLLFHISG), 1921–1958 (EILPTLFGLLLGFLASTCADKRTIAARTLGDLVRKLGE), 1959–1996 (KILPEIIPILEEGLRSQKSDERQGVCIGLSEIMKSTSR), 2001–2038 (YFSESLVPTARKALCDPLEEVREAAAKTFEQLHSTIGH), 2039–2076 (QALEDILPFLLKQLDDEEVSEFALDGLKQVMAIKSRVV), 2078–2106 (PYLVPKLTTPPVNTRVLAFLSSVAGDALT), 2107–2146 (RHLGVILPAVMLALKEKLGTPDEQLEMANCQAVILSVEDD), 2147–2184 (TGHRIIIEDLLEATRSPEVGMRQAAAIILNIYCSRSKA), 2188–2225 (SHLRSLVSGLIRLFNDSSPVVLEESWDALNAITKKLDA), 2259–2296 (KGVTSILPVLREGVLTGSPEQKEEAAKALGLVIRLTSA), 2301–2338 (PSVVSITGPLIRILGDRFSWNVKAALLETLSLLLAKVG), 2339–2380 (IALK…IHIK), 2382–2417 (DPLFTELLNGIRAMEDPGVRDTMLQALRFVIQGAGA), 2422–2459 (VIRKNIVSLLLSMLGHDEDNTRISSAGCLGELCAFLTE), 2546–2583 (QLPAKLSSLFVKCLQNPSSDIRLVAEKMIWWANKDPLP), and 2588–2625 (QAIKPILKALLDNTKDKNTVVRAYSDQAIVNLLKMRQG). The RWDBD region stretch occupies residues 2260-2408 (GVTSILPVLR…GVRDTMLQAL (149 aa)). Ser2276 carries the post-translational modification Phosphoserine. An HEAT 47; degenerate repeat occupies 2627-2661 (EVFQSLSKILDVASLEVLNEVNRRSLKKLASQADS).

It belongs to the GCN1 family. In terms of assembly, interacts with EIF2AK4/GCN2; this interaction stimulates the EIF2AK4/GCN2 kinase activity and is impaired by IMPACT upon a variety of stress conditions, such as amino acid depletion, UV-C irradiation, proteasome inhibitor treatment and glucose deprivation. Interacts with IMPACT; this prevents the interaction of GCN1 with EIF2AK4/GCN2 and inhibits EIF2AK4/GCN2 kinase activity. Interacts with RNF14; interaction takes place following ribosome stalling and promotes recruitment of RNF14. Ubiquitously expressed. Expressed in skeletal muscules, ovary and testis.

It localises to the cytoplasm. In terms of biological role, ribosome collision sensor that plays a key role in the RNF14-RNF25 translation quality control pathway, a pathway that takes place when a ribosome has stalled during translation, and which promotes ubiquitination and degradation of translation factors on stalled ribosomes. Directly binds to the ribosome and acts as a sentinel for colliding ribosomes: activated following ribosome stalling and promotes recruitment of RNF14, which directly ubiquitinates EEF1A1/eEF1A, leading to its degradation. In addition to EEF1A1/eEF1A, the RNF14-RNF25 translation quality control pathway mediates degradation of ETF1/eRF1 and ubiquitination of ribosomal protein. GCN1 also acts as a positive activator of the integrated stress response (ISR) by mediating activation of EIF2AK4/GCN2 in response to amino acid starvation. Interaction with EIF2AK4/GCN2 on translating ribosomes stimulates EIF2AK4/GCN2 kinase activity, leading to phosphorylation of eukaryotic translation initiation factor 2 (eIF-2-alpha/EIF2S1). EIF2S1/eIF-2-alpha phosphorylation converts EIF2S1/eIF-2-alpha into a global protein synthesis inhibitor, leading to a global attenuation of cap-dependent translation, and thus to a reduced overall utilization of amino acids, while concomitantly initiating the preferential translation of ISR-specific mRNAs, such as the transcriptional activator ATF4, and hence allowing ATF4-mediated reprogramming of amino acid biosynthetic gene expression to alleviate nutrient depletion. The protein is Stalled ribosome sensor GCN1 of Homo sapiens (Human).